A 181-amino-acid chain; its full sequence is TATA-box-binding protein (181 aa).

2 consecutive repeat copies span residues 7–83 and 98–173.

This sequence belongs to the TBP family.

Functionally, general factor that plays a role in the activation of archaeal genes transcribed by RNA polymerase. Binds specifically to the TATA box promoter element which lies close to the position of transcription initiation. This is TATA-box-binding protein from Methanococcus aeolicus (strain ATCC BAA-1280 / DSM 17508 / OCM 812 / Nankai-3).